We begin with the raw amino-acid sequence, 231 residues long: Orotidine 5'-phosphate decarboxylase (231 aa).

Substrate contacts are provided by residues Asp-11, Lys-34, Asp-61 to Thr-70, Thr-117, Arg-179, Gln-188, Gly-208, and Arg-209. The Proton donor role is filled by Lys-63.

The protein belongs to the OMP decarboxylase family. Type 1 subfamily. Homodimer.

The enzyme catalyses orotidine 5'-phosphate + H(+) = UMP + CO2. It participates in pyrimidine metabolism; UMP biosynthesis via de novo pathway; UMP from orotate: step 2/2. Catalyzes the decarboxylation of orotidine 5'-monophosphate (OMP) to uridine 5'-monophosphate (UMP). The protein is Orotidine 5'-phosphate decarboxylase of Streptococcus thermophilus (strain ATCC BAA-491 / LMD-9).